We begin with the raw amino-acid sequence, 266 residues long: 3-methyl-2-oxobutanoate hydroxymethyltransferase 2 (266 aa).

Mg(2+) is bound by residues Asp45 and Asp84. Residues 45-46 (DS), Asp84, and Lys112 each bind 3-methyl-2-oxobutanoate. Glu114 contacts Mg(2+). Glu181 functions as the Proton acceptor in the catalytic mechanism.

This sequence belongs to the PanB family. In terms of assembly, homodecamer; pentamer of dimers. The cofactor is Mg(2+).

It is found in the cytoplasm. It carries out the reaction 3-methyl-2-oxobutanoate + (6R)-5,10-methylene-5,6,7,8-tetrahydrofolate + H2O = 2-dehydropantoate + (6S)-5,6,7,8-tetrahydrofolate. It participates in cofactor biosynthesis; (R)-pantothenate biosynthesis; (R)-pantoate from 3-methyl-2-oxobutanoate: step 1/2. Its function is as follows. Catalyzes the reversible reaction in which hydroxymethyl group from 5,10-methylenetetrahydrofolate is transferred onto alpha-ketoisovalerate to form ketopantoate. This is 3-methyl-2-oxobutanoate hydroxymethyltransferase 2 from Pseudomonas aeruginosa (strain UCBPP-PA14).